Reading from the N-terminus, the 355-residue chain is Syntaxin-5 (355 aa).

Residues 1 to 333 (MIPRKRYGSK…KYFQSVTSNR (333 aa)) are Cytoplasmic-facing. Positions 28 to 37 (PATAGSSSSD) are enriched in polar residues. The disordered stretch occupies residues 28 to 47 (PATAGSSSSDIAPLPPPVAL). The short motif at 245–247 (IDM) is the IxM motif; signal for cargo packaging into COPII-coated vesicles element. A t-SNARE coiled-coil homology domain is found at 263–325 (DSYIQSRADT…EAAHSEILKY (63 aa)). The stretch at 287 to 318 (FQQLAHMVKEQEETIQRIDENVLGAQLDVEAA) forms a coiled coil. A helical; Anchor for type IV membrane protein membrane pass occupies residues 334-354 (WLMVKIFLILIVFFIIFVVFL). Position 355 (A355) is a topological domain, vesicular.

Belongs to the syntaxin family. As to quaternary structure, part of a ternary complex containing STX5A, NSFL1C and VCP. Part of a unique SNARE complex composed of the Golgi SNAREs GOSR1, GOSR2 and YKT6. This complex also includes VTI1A. Component of a SNARE complex consisting of STX5, YKT6, GOSR1 and BET1L. Interacts with BET1L. Interacts with BET1. Interacts with COG4. Interacts with GM130/GOLGA2. Interacts (via IxM motif) with SEC24C and SEC24D; mediates STX5 packaging into COPII-coated vesicles. Interacts with VLDLR; this interaction mediates VLDLR translocation from the endoplasmic reticulum to the plasma membrane.

It is found in the endoplasmic reticulum-Golgi intermediate compartment membrane. Its subcellular location is the golgi apparatus membrane. In terms of biological role, mediates endoplasmic reticulum to Golgi transport. Together with p115/USO1 and GM130/GOLGA2, involved in vesicle tethering and fusion at the cis-Golgi membrane to maintain the stacked and inter-connected structure of the Golgi apparatus. In Bos taurus (Bovine), this protein is Syntaxin-5 (STX5).